A 155-amino-acid chain; its full sequence is Small ribosomal subunit protein bS6 (155 aa).

Basic and acidic residues predominate over residues 115–137; the sequence is EADAAKAEADAARVEAEAKKAET. Residues 115 to 155 form a disordered region; the sequence is EADAAKAEADAARVEAEAKKAETDETDETVDAETPENEEEN. Over residues 138–155 the composition is skewed to acidic residues; sequence DETDETVDAETPENEEEN.

Belongs to the bacterial ribosomal protein bS6 family.

Binds together with bS18 to 16S ribosomal RNA. In Desulforapulum autotrophicum (strain ATCC 43914 / DSM 3382 / VKM B-1955 / HRM2) (Desulfobacterium autotrophicum), this protein is Small ribosomal subunit protein bS6.